The chain runs to 146 residues: MQKTTFVKNEAALANKKWYVIDASNLILGKLAVEAANILRGKNKVDFTPNVDCGDYLIIINSDKIVLSSDKADREKWYTHSGYIGGLKEKSGRLMIEKYSDKLIYGAIKGMLPKNTLSRYLIKKLFIYKDANHKQAAQKPMEIKLN.

The protein belongs to the universal ribosomal protein uL13 family. As to quaternary structure, part of the 50S ribosomal subunit.

This protein is one of the early assembly proteins of the 50S ribosomal subunit, although it is not seen to bind rRNA by itself. It is important during the early stages of 50S assembly. The polypeptide is Large ribosomal subunit protein uL13 (Malacoplasma penetrans (strain HF-2) (Mycoplasma penetrans)).